A 331-amino-acid polypeptide reads, in one-letter code: UAP56-interacting factor (331 aa).

The short motif at 16-34 (APDKVDMSLDDIIRLNKKE) is the UAP56-binding motif element. Disordered regions lie at residues 30–51 (LNKKEQQARRPSPGNRRPLQKG), 63–99 (RARGQTQRGGGVPRGAITRAGVGRGRKIPPPVGRRRG), and 158–193 (GQRRPYRQTDIQRGLNSTRPFQQRRRPLPPVQTQRE). The segment covering 166–175 (TDIQRGLNST) has biased composition (polar residues).

The protein belongs to the UIF family.

The protein resides in the nucleus. Its subcellular location is the nucleoplasm. It localises to the nucleus speckle. Functionally, required for mRNA export from the nucleus to the cytoplasm. Acts as an adapter that uses the ddx39b/uap56-nfx1 pathway to ensure efficient mRNA export and delivering to the nuclear pore. This Salmo salar (Atlantic salmon) protein is UAP56-interacting factor (fyttd1).